Here is a 78-residue protein sequence, read N- to C-terminus: Acyl carrier protein (78 aa).

The Carrier domain maps to Ser2–Asn77. Ser37 is modified (O-(pantetheine 4'-phosphoryl)serine).

It belongs to the acyl carrier protein (ACP) family. In terms of processing, 4'-phosphopantetheine is transferred from CoA to a specific serine of apo-ACP by AcpS. This modification is essential for activity because fatty acids are bound in thioester linkage to the sulfhydryl of the prosthetic group.

The protein localises to the cytoplasm. The protein operates within lipid metabolism; fatty acid biosynthesis. Functionally, carrier of the growing fatty acid chain in fatty acid biosynthesis. The polypeptide is Acyl carrier protein (Neisseria gonorrhoeae (strain ATCC 700825 / FA 1090)).